Consider the following 141-residue polypeptide: Nucleoside triphosphatase NudI (141 aa).

Residues 1–141 form the Nudix hydrolase domain; sequence MRQRTIVCPL…RVTLSQKGLL (141 aa). The short motif at 38-59 is the Nudix box element; that stretch reads GGVEPVERIEEALRREIREELG.

The protein belongs to the Nudix hydrolase family. NudI subfamily. In terms of assembly, monomer. Mg(2+) is required as a cofactor.

It carries out the reaction a ribonucleoside 5'-triphosphate + H2O = a ribonucleoside 5'-phosphate + diphosphate + H(+). It catalyses the reaction a 2'-deoxyribonucleoside 5'-triphosphate + H2O = a 2'-deoxyribonucleoside 5'-phosphate + diphosphate + H(+). The enzyme catalyses dUTP + H2O = dUMP + diphosphate + H(+). The catalysed reaction is dTTP + H2O = dTMP + diphosphate + H(+). It carries out the reaction dCTP + H2O = dCMP + diphosphate + H(+). In terms of biological role, catalyzes the hydrolysis of nucleoside triphosphates, with a preference for pyrimidine deoxynucleoside triphosphates (dUTP, dTTP and dCTP). In Klebsiella pneumoniae (strain 342), this protein is Nucleoside triphosphatase NudI.